We begin with the raw amino-acid sequence, 346 residues long: MAEITAKLVKELREKSGAGVMDAKKALVETDGDMDKAVELLREKGMAKAAKKADRVAAEGLTGVYVHGNVAAVVEVNAETDFVAKNAQFVELVNATAKVIAEGKPANNDEALALVMPSGETLAEAYVNATATIGEKISFRRFALIEKTDEQHLGAYQHNGGRIGVISVVEGGDDALAKQVSMHIAAMKPTVLSYTELDAQFIKDELAQLNHAIELDNESRAMVDKPALPFLKYGSKAQLSDDVITAAEADIKAELAAEGKPEKIWDKIIPGKMDRFMLDNTKVDQAYTLLAQVYIMDDSKTVEAYLDSVNAKAIAFARFEVGEGIEKKANDFESEVAATMAAALNN.

The involved in Mg(2+) ion dislocation from EF-Tu stretch occupies residues 80–83 (TDFV).

The protein belongs to the EF-Ts family.

It localises to the cytoplasm. In terms of biological role, associates with the EF-Tu.GDP complex and induces the exchange of GDP to GTP. It remains bound to the aminoacyl-tRNA.EF-Tu.GTP complex up to the GTP hydrolysis stage on the ribosome. This chain is Elongation factor Ts, found in Streptococcus pyogenes serotype M18 (strain MGAS8232).